We begin with the raw amino-acid sequence, 99 residues long: UPF0235 protein HS_1657 (99 aa).

It belongs to the UPF0235 family.

The polypeptide is UPF0235 protein HS_1657 (Histophilus somni (strain 129Pt) (Haemophilus somnus)).